A 2151-amino-acid chain; its full sequence is RNA-directed RNA polymerase L (2151 aa).

Mn(2+) contacts are provided by His36, Glu54, Asp97, Glu110, and Val111. The active-site For endonuclease activity is the Lys124. A RdRp catalytic domain is found at 956–1142; sequence NGKFIRMKRK…SVNTEMWKSM (187 aa). Asp1099 serves as a coordination point for Mg(2+).

The protein belongs to the Bunyavirales RNA polymerase family. In terms of assembly, interacts with the viral nucleoprotein. The cofactor is Mn(2+). It depends on Mg(2+) as a cofactor.

It localises to the host cytoplasm. Its subcellular location is the host perinuclear region. It carries out the reaction RNA(n) + a ribonucleoside 5'-triphosphate = RNA(n+1) + diphosphate. Its function is as follows. RNA-dependent RNA polymerase, which is responsible for the replication and transcription of the viral RNA genome using antigenomic RNA as an intermediate. During transcription, synthesizes subgenomic RNAs and assures their capping by a cap-snatching mechanism, which involves the endonuclease activity cleaving the host capped pre-mRNAs. These short capped RNAs are then used as primers for viral transcription. Cleaves ssRNA substrates but not DNA. Seems to downregulate the expression of its own and heterologous mRNAs through its endonuclease activity. The polypeptide is RNA-directed RNA polymerase L (Apodemus agrarius (Eurasian field mouse)).